The chain runs to 234 residues: Glucosamine-6-phosphate deaminase (234 aa).

The Proton acceptor; for enolization step role is filled by Asp62. Asn128 acts as the For ring-opening step in catalysis. The Proton acceptor; for ring-opening step role is filled by His130. The active-site For ring-opening step is the Glu135.

Belongs to the glucosamine/galactosamine-6-phosphate isomerase family. NagB subfamily.

The catalysed reaction is alpha-D-glucosamine 6-phosphate + H2O = beta-D-fructose 6-phosphate + NH4(+). It functions in the pathway amino-sugar metabolism; N-acetylneuraminate degradation; D-fructose 6-phosphate from N-acetylneuraminate: step 5/5. Its function is as follows. Catalyzes the reversible isomerization-deamination of glucosamine 6-phosphate (GlcN6P) to form fructose 6-phosphate (Fru6P) and ammonium ion. This Ligilactobacillus salivarius (strain UCC118) (Lactobacillus salivarius) protein is Glucosamine-6-phosphate deaminase.